A 417-amino-acid chain; its full sequence is NADH-quinone oxidoreductase subunit D (417 aa).

The protein belongs to the complex I 49 kDa subunit family. As to quaternary structure, NDH-1 is composed of 14 different subunits. Subunits NuoB, C, D, E, F, and G constitute the peripheral sector of the complex.

Its subcellular location is the cell inner membrane. It carries out the reaction a quinone + NADH + 5 H(+)(in) = a quinol + NAD(+) + 4 H(+)(out). Functionally, NDH-1 shuttles electrons from NADH, via FMN and iron-sulfur (Fe-S) centers, to quinones in the respiratory chain. The immediate electron acceptor for the enzyme in this species is believed to be ubiquinone. Couples the redox reaction to proton translocation (for every two electrons transferred, four hydrogen ions are translocated across the cytoplasmic membrane), and thus conserves the redox energy in a proton gradient. This chain is NADH-quinone oxidoreductase subunit D, found in Burkholderia orbicola (strain MC0-3).